The following is a 141-amino-acid chain: uncharacterized protein (141 aa).

A helical membrane pass occupies residues 114 to 134; the sequence is ILFTCYIQSFSLLISNFFIAI.

The protein localises to the membrane. This is an uncharacterized protein from Schizosaccharomyces pombe (strain 972 / ATCC 24843) (Fission yeast).